Reading from the N-terminus, the 165-residue chain is Nascent polypeptide-associated complex subunit beta (165 aa).

Positions 33–97 (TTDDKRLQST…PQTKKLQDIL (65 aa)) constitute an NAC-A/B domain. Residues 120 to 165 (QKQAPGAGDVPATIQEEDDDDDVPDLVVGETFETPATEEAPKAAAS) are disordered. Positions 134 to 143 (QEEDDDDDVP) are enriched in acidic residues. A compositionally biased stretch (low complexity) spans 144–165 (DLVVGETFETPATEEAPKAAAS).

It belongs to the NAC-beta family. As to quaternary structure, part of the nascent polypeptide-associated complex (NAC).

The sequence is that of Nascent polypeptide-associated complex subunit beta from Arabidopsis thaliana (Mouse-ear cress).